The following is a 504-amino-acid chain: L-carnitine/gamma-butyrobetaine antiporter (504 aa).

The next 12 helical transmembrane spans lie at 10 to 30, 51 to 71, 92 to 112, 143 to 163, 195 to 215, 231 to 251, 263 to 283, 316 to 336, 347 to 367, 398 to 418, 446 to 466, and 475 to 495; these read IEPKVFFPPLIIVGILCWLTV, WGWAFEWYMVVMLFGWFWLVF, IFMMFASCTSAAVLFWGSIEI, GPLPWATYSFLSVAFAYFFFV, FYLVALIFAMGTSLGLATPLV, LDAIIITCWIILNAICVACGL, SYLSFLMLGWVFIVSGASFIM, WTVFYWAWWVIYAIQMSIFLA, LCFGMVLGLTASTWILWTVLG, WAALPLSTATMWGFFILCFIA, LLVRIGWSILVGIIGIVLLAL, and AIIAGGCPLFFVNIMVTLSFI.

Belongs to the BCCT transporter (TC 2.A.15) family. CaiT subfamily. In terms of assembly, homotrimer.

It is found in the cell inner membrane. It carries out the reaction 4-(trimethylamino)butanoate(in) + (R)-carnitine(out) = 4-(trimethylamino)butanoate(out) + (R)-carnitine(in). Its pathway is amine and polyamine metabolism; carnitine metabolism. Its function is as follows. Catalyzes the exchange of L-carnitine for gamma-butyrobetaine. This is L-carnitine/gamma-butyrobetaine antiporter from Escherichia coli (strain K12 / MC4100 / BW2952).